Reading from the N-terminus, the 151-residue chain is Small heat shock protein HspD (151 aa).

The sHSP domain occupies 28 to 138 (RATEDNYPPY…KPRRIAINGA (111 aa)).

This sequence belongs to the small heat shock protein (HSP20) family.

This chain is Small heat shock protein HspD (hspD), found in Bradyrhizobium diazoefficiens (strain JCM 10833 / BCRC 13528 / IAM 13628 / NBRC 14792 / USDA 110).